Here is a 349-residue protein sequence, read N- to C-terminus: Crinkler effector protein 5 (349 aa).

The signal sequence occupies residues 1 to 17 (MVKLFCSIVGVAGSPFS). An LQLFLAK domain region spans residues 18–57 (VEVNEGKTVDDLKKAIKAENLDDPTLRNVAPKNLQLFLAK). Residues 58–108 (KGDAWLRYNEDLDTYLQSEIDTSSYLHMRASWKLSKPTLFGPDVSLGEDVV) form a DWL domain region. Residues 109–115 (HVLVVVP) carry the HVLVXXP motif motif.

Belongs to the Crinkler effector family.

The protein resides in the secreted. Its subcellular location is the host nucleus. Secreted effector that elicits necrosis in host plants, a characteristic of plant innate immunity. In Phytophthora infestans (Potato late blight agent), this protein is Crinkler effector protein 5.